The chain runs to 268 residues: MPKRGRVGLAESFQSKTKKQKENEYNAFQREKMERALANNARAAPKSSGMTFRPLTVPVAGSVIYSRPRVPQVRTNQMSTFVVNTELVANITLAAAGAFSFTTQPLIPSFGSWLANIADLYSKWRWISCSVVYIPKCPTSTQGSVVMAIVYDAQDTVPTTRTQVSQCYQSITFPPYAGYGGASALNHKGSGGESLVSTLDTNRVDKRWYSTIGNAAFTALTSIDKNQFCPATAIIAGDGGPAAATAVGDIFMRYDIEFIEPVNPSINV.

The tract at residues 1–21 (MPKRGRVGLAESFQSKTKKQK) is disordered. A r domain, interaction with RNA region spans residues 1-77 (MPKRGRVGLA…PRVPQVRTNQ (77 aa)). The tract at residues 78–258 (MSTFVVNTEL…DIFMRYDIEF (181 aa)) is s domain, virion shell. Residues 259–268 (IEPVNPSINV) form a p domain, projecting region.

It belongs to the icosahedral plant coat protein family. In terms of assembly, homomultimer.

It localises to the virion. Capsid protein self-assembles to form an icosahedral capsid with a T=3 symmetry, about 28 nm in diameter, and consisting of 180 capsid proteins. In Chenopodium amaranticolor (Quinoa), this protein is Capsid protein.